The primary structure comprises 62 residues: Alpha-conotoxin-like Bn1.3 (62 aa).

The first 18 residues, 1–18 (MGMRMMFTVFLLVVLATA), serve as a signal peptide directing secretion. A propeptide spanning residues 19 to 48 (VLPVTLDRASDGRNAAANAKTPRLIAPFIR) is cleaved from the precursor. Intrachain disulfides connect cysteine 51/cysteine 57 and cysteine 52/cysteine 61. At cysteine 61 the chain carries Cysteine amide.

Belongs to the conotoxin A superfamily. Expressed by the venom duct.

The protein localises to the secreted. Does not show activity on the acetylcholine receptors tested. The sequence is that of Alpha-conotoxin-like Bn1.3 from Conus bandanus (Banded marble cone).